Consider the following 500-residue polypeptide: L-arabinose isomerase (500 aa).

4 residues coordinate Mn(2+): E306, E333, H350, and H450.

This sequence belongs to the arabinose isomerase family. In terms of assembly, homohexamer. The cofactor is Mn(2+).

The enzyme catalyses beta-L-arabinopyranose = L-ribulose. The protein operates within carbohydrate degradation; L-arabinose degradation via L-ribulose; D-xylulose 5-phosphate from L-arabinose (bacterial route): step 1/3. Functionally, catalyzes the conversion of L-arabinose to L-ribulose. The polypeptide is L-arabinose isomerase (Shigella dysenteriae serotype 1 (strain Sd197)).